Here is a 513-residue protein sequence, read N- to C-terminus: Protein indeterminate-domain 11 (513 aa).

Positions 1–84 (MMNKDMLLHQ…QPGNPDPESE (84 aa)) are disordered. The segment covering 10-45 (QHQQPQQDENMSNLTSASGDQASVSSGNITEASGSN) has biased composition (polar residues). Residues 51–60 (QQQQEQQQQQ) show a composition bias toward low complexity. At Ser-89 the chain carries Phosphoserine. 2 consecutive C2H2-type zinc fingers follow at residues 99–121 (FVCEICNKGFQRDQNLQLHRRGH) and 141–171 (YVCPEASCVHHDPSRALGDLTGIKKHFCRKH). Residues 163 to 170 (IKKHFCRK) carry the Nuclear localization signal motif. The C2H2-type 2; degenerate zinc finger occupies 176–199 (WKCDKCSKKYAVQSDCKAHSKTCG). 8 residues coordinate Zn(2+): Cys-178, Cys-181, His-194, Cys-198, Cys-205, Cys-207, His-220, and Cys-224. The segment at 203–226 (YRCDCGTLFSRRDSFITHRAFCEA) adopts a CCHC-type 2; atypical zinc-finger fold. Positions 213–225 (RRDSFITHRAFCE) are SHR-binding. Disordered stretches follow at residues 255–280 (ASHPHHHHQTQPTINVSSSSSSSHNH) and 334–358 (PQPHALTSSNPNPSNGGGGGGSLFS). Over residues 264 to 280 (TQPTINVSSSSSSSHNH) the composition is skewed to low complexity.

The protein localises to the nucleus. Functionally, probable transcription factor. The polypeptide is Protein indeterminate-domain 11 (Arabidopsis thaliana (Mouse-ear cress)).